Here is a 176-residue protein sequence, read N- to C-terminus: Crossover junction endodeoxyribonuclease RuvC (176 aa).

Active-site residues include D8, E69, and D141. 3 residues coordinate Mg(2+): D8, E69, and D141.

The protein belongs to the RuvC family. In terms of assembly, homodimer which binds Holliday junction (HJ) DNA. The HJ becomes 2-fold symmetrical on binding to RuvC with unstacked arms; it has a different conformation from HJ DNA in complex with RuvA. In the full resolvosome a probable DNA-RuvA(4)-RuvB(12)-RuvC(2) complex forms which resolves the HJ. Mg(2+) serves as cofactor.

The protein resides in the cytoplasm. The catalysed reaction is Endonucleolytic cleavage at a junction such as a reciprocal single-stranded crossover between two homologous DNA duplexes (Holliday junction).. The RuvA-RuvB-RuvC complex processes Holliday junction (HJ) DNA during genetic recombination and DNA repair. Endonuclease that resolves HJ intermediates. Cleaves cruciform DNA by making single-stranded nicks across the HJ at symmetrical positions within the homologous arms, yielding a 5'-phosphate and a 3'-hydroxyl group; requires a central core of homology in the junction. The consensus cleavage sequence is 5'-(A/T)TT(C/G)-3'. Cleavage occurs on the 3'-side of the TT dinucleotide at the point of strand exchange. HJ branch migration catalyzed by RuvA-RuvB allows RuvC to scan DNA until it finds its consensus sequence, where it cleaves and resolves the cruciform DNA. This Pseudomonas syringae pv. tomato (strain ATCC BAA-871 / DC3000) protein is Crossover junction endodeoxyribonuclease RuvC.